Here is a 591-residue protein sequence, read N- to C-terminus: MISWHELYMVLSAVVPLYVAMMVAYGSVRWWGVLTPEQCSGINRFVAVIAVPLLSFHFISSSDPYAMNLRFVAADTLQKVLVLAALAAWSRFPARFVPPAWPPLDCSITLFSVSTLPNTLVMGIPLLVSMYGPYSGDLMVQIVVLQSIVWYTLLLFLFEFRAARVLIAAQFPDTAASIAAVHVDPDVVSLEGSQAEAHAEVAPDGRLRMVVCRSSVSRRSAAAAATPRASNLTGVEIYSISSSRNATPRGSTFTLADIPGHQPPNSALRASSFGAADLFSLHSSSRQHTPRPSSFDEHAAARARASATVAPTNDLKDTHMIEWSSGASAASEVTGLPVFRSGRETRRLVPSDAPSIASSRVIRPPPGATGGERAASFNKAVGGQDELAKLEAGAKTEQQTTAVTTTTKGGGAAGAERARGQQNAPAGVMLRLILTTVWRRLIRNPNTYASLIGLTWSLIAFRFHITMPIIVAKSISILSDAGLGMAMFSLGLFMATQPKIIACGYSVAAASMGVRFFFGPAIMAAASAAVGIRGTLLRIAIVQAALPQGIVPFVFAKEYNLHATILCTLVIFGMLIALPITLVYYIILGLL.

Residues 1–6 lie on the Extracellular side of the membrane; it reads MISWHE. The chain crosses the membrane as a helical span at residues 7–27; that stretch reads LYMVLSAVVPLYVAMMVAYGS. Topologically, residues 28-38 are cytoplasmic; the sequence is VRWWGVLTPEQ. A helical membrane pass occupies residues 39–59; it reads CSGINRFVAVIAVPLLSFHFI. A (indol-3-yl)acetate-binding site is contributed by Val-51. Topologically, residues 60–70 are extracellular; sequence SSSDPYAMNLR. Residues 71-93 traverse the membrane as a helical segment; it reads FVAADTLQKVLVLAALAAWSRFP. Topologically, residues 94–107 are cytoplasmic; the sequence is ARFVPPAWPPLDCS. Residues 108–128 form a helical membrane-spanning segment; it reads ITLFSVSTLPNTLVMGIPLLV. Residues Asn-118 and Leu-120 each coordinate (indol-3-yl)acetate. Over 129 to 137 the chain is Extracellular; it reads SMYGPYSGD. Residues 138 to 158 traverse the membrane as a helical segment; the sequence is LMVQIVVLQSIVWYTLLLFLF. Tyr-151 lines the (indol-3-yl)acetate pocket. Residues 159–450 are Cytoplasmic-facing; it reads EFRAARVLIA…LIRNPNTYAS (292 aa). 2 stretches are compositionally biased toward polar residues: residues 243–254 and 283–292; these read SRNATPRGSTFT and SSSRQHTPRP. Disordered regions lie at residues 243-269, 283-313, 344-374, and 392-420; these read SRNA…SALR, SSSR…APTN, ETRR…GERA, and AGAK…RARG. Over residues 395–407 the composition is skewed to low complexity; sequence KTEQQTTAVTTTT. The chain crosses the membrane as a helical span at residues 451–471; sequence LIGLTWSLIAFRFHITMPIIV. Residues 472-474 are Extracellular-facing; the sequence is AKS. A helical membrane pass occupies residues 475–495; it reads ISILSDAGLGMAMFSLGLFMA. At 496-511 the chain is on the cytoplasmic side; that stretch reads TQPKIIACGYSVAAAS. Residues 512–532 traverse the membrane as a helical segment; the sequence is MGVRFFFGPAIMAAASAAVGI. Residues 533–535 lie on the Extracellular side of the membrane; sequence RGT. A helical transmembrane segment spans residues 536 to 556; the sequence is LLRIAIVQAALPQGIVPFVFA. Residues Ile-550 and Val-551 each contribute to the (indol-3-yl)acetate site. The Cytoplasmic segment spans residues 557–568; sequence KEYNLHATILCT. The helical transmembrane segment at 569–589 threads the bilayer; it reads LVIFGMLIALPITLVYYIILG. Residues 590–591 are Extracellular-facing; the sequence is LL.

This sequence belongs to the auxin efflux carrier (TC 2.A.69.1) family. In terms of assembly, homodimer. In terms of tissue distribution, expressed in stem bases and leaves.

It localises to the membrane. May act as a component of the auxin efflux carrier. The polypeptide is Probable auxin efflux carrier component 3b (Oryza sativa subsp. japonica (Rice)).